Consider the following 269-residue polypeptide: Zinc import ATP-binding protein ZnuC (269 aa).

Residues 6–221 form the ABC transporter domain; the sequence is VRLTQVGVSF…PAFVELFGQD (216 aa). 38 to 45 is a binding site for ATP; sequence GPNGAGKT.

The protein belongs to the ABC transporter superfamily. Zinc importer (TC 3.A.1.15.5) family. The complex is composed of two ATP-binding proteins (ZnuC), two transmembrane proteins (ZnuB) and a solute-binding protein (ZnuA).

It is found in the cell inner membrane. The enzyme catalyses Zn(2+)(out) + ATP(in) + H2O(in) = Zn(2+)(in) + ADP(in) + phosphate(in) + H(+)(in). Functionally, part of the ABC transporter complex ZnuABC involved in zinc import. Responsible for energy coupling to the transport system. The chain is Zinc import ATP-binding protein ZnuC from Pseudomonas aeruginosa (strain UCBPP-PA14).